The primary structure comprises 1225 residues: uncharacterized protein (1225 aa).

The first 27 residues, 1-27 (MKRFLHRVKWPLLLSSIAVSLGIVAVA), serve as a signal peptide directing secretion. Residue C28 is the site of N-palmitoyl cysteine attachment. The S-diacylglycerol cysteine moiety is linked to residue C28. The disordered stretch occupies residues 995 to 1014 (QSEKSSSNGGQAQLQSTQSS).

Belongs to the MG307/MG309/MG338 family.

The protein resides in the cell membrane. This is an uncharacterized protein from Mycoplasma genitalium (strain ATCC 33530 / DSM 19775 / NCTC 10195 / G37) (Mycoplasmoides genitalium).